We begin with the raw amino-acid sequence, 503 residues long: Na(+)-translocating NADH-quinone reductase subunit B (503 aa).

The next 3 helical transmembrane spans lie at 55 to 75, 120 to 142, and 160 to 180; these read MMLV…NSGL, IFLP…FAII, and LILP…FGVV. Thr-248 bears the FMN phosphoryl threonine mark. The next 5 helical transmembrane spans lie at 361 to 381, 384 to 404, 417 to 437, 452 to 472, and 475 to 495; these read TSTV…IASW, MLSF…MSIL, FFIP…LVFM, WLYG…NPAY, and GVML…NIAL.

This sequence belongs to the NqrB/RnfD family. Composed of six subunits; NqrA, NqrB, NqrC, NqrD, NqrE and NqrF. Requires FMN as cofactor.

It is found in the cell inner membrane. It carries out the reaction a ubiquinone + n Na(+)(in) + NADH + H(+) = a ubiquinol + n Na(+)(out) + NAD(+). In terms of biological role, NQR complex catalyzes the reduction of ubiquinone-1 to ubiquinol by two successive reactions, coupled with the transport of Na(+) ions from the cytoplasm to the periplasm. NqrA to NqrE are probably involved in the second step, the conversion of ubisemiquinone to ubiquinol. This Chlamydia trachomatis serovar A (strain ATCC VR-571B / DSM 19440 / HAR-13) protein is Na(+)-translocating NADH-quinone reductase subunit B.